The sequence spans 155 residues: Large ribosomal subunit protein eL19 (155 aa).

Residues 66–84 (VRHLQRRKGRRRGMGRRKG) show a composition bias toward basic residues. Positions 66-85 (VRHLQRRKGRRRGMGRRKGV) are disordered.

This sequence belongs to the eukaryotic ribosomal protein eL19 family. In terms of assembly, part of the 50S ribosomal subunit.

Binds to the 23S rRNA. This Aeropyrum pernix (strain ATCC 700893 / DSM 11879 / JCM 9820 / NBRC 100138 / K1) protein is Large ribosomal subunit protein eL19.